We begin with the raw amino-acid sequence, 551 residues long: Cleavage and polyadenylation specificity factor subunit 6 (551 aa).

Positions 1–213 are necessary for interaction with NXF1; sequence MADGVDHIDI…RGRFPGAVPG (213 aa). The RRM domain maps to 81-161; that stretch reads IALYIGNLTW…QNPVVTPCNK (81 aa). Residues 81 to 161 are necessary for interaction with NUDT21/CPSF5; that stretch reads IALYIGNLTW…QNPVVTPCNK (81 aa). The segment at 81 to 161 is necessary for nuclear paraspeckles localization; it reads IALYIGNLTW…QNPVVTPCNK (81 aa). Threonine 157 is modified (phosphothreonine). The segment covering 169-180 has biased composition (polar residues); the sequence is MQSRKTTQSGQM. Disordered stretches follow at residues 169–411 and 477–551; these read MQSR…PLSE and LHGI…YRHR. A GAR motif is present at residues 202 to 206; it reads RGRGR. The span at 207 to 219 shows a compositional bias: low complexity; sequence FPGAVPGGDRFPG. Pro residues-rich tracts occupy residues 220–265, 285–366, and 377–388; these read PAGP…PLAG, GQPP…PPPT, and GPPPTDPYGRPP. The (Microbial infection) Binds to HIV-1 capsid protein p24 (CA) stretch occupies residues 358-551; it reads NPAFFPPPTN…RDREREYRHR (194 aa). The span at 389 to 404 shows a compositional bias: basic and acidic residues; it reads PYDRGDYGPPGREMDT. 2 positions are modified to phosphothreonine: threonine 404 and threonine 407. The tract at residues 404-551 is sufficient for nuclear speckle localization; sequence TARTPLSEAE…RDREREYRHR (148 aa). The necessary for RNA-binding stretch occupies residues 405 to 551; that stretch reads ARTPLSEAEF…RDREREYRHR (147 aa). A necessary for interaction with SRSF3, SRSF7 and TRA2B/SFRS10 region spans residues 481-551; the sequence is ESKSYGSGSR…RDREREYRHR (71 aa). Positions 489–503 are enriched in basic and acidic residues; it reads SRRERSRERDHSRSR. An arg/Ser-rich domain region spans residues 490 to 551; the sequence is RRERSRERDH…RDREREYRHR (62 aa). 5 positions are modified to phosphoserine: serine 494, serine 500, serine 511, serine 513, and serine 525. Basic residues predominate over residues 504–514; that stretch reads EKSRRHKSRSR. A sufficient for nuclear targeting region spans residues 510–551; that stretch reads KSRSRDRHDDYYRERSRERERHRDRDRDRDRERDREREYRHR. The span at 515 to 551 shows a compositional bias: basic and acidic residues; that stretch reads DRHDDYYRERSRERERHRDRDRDRDRERDREREYRHR.

It belongs to the RRM CPSF6/7 family. In terms of assembly, component of the cleavage factor Im (CFIm) complex which is a heterotetramer composed of two subunits of NUDT21/CPSF5 and two subunits of CPSF6 or CPSF7 or a heterodimer of CPSF6 and CPSF7. The cleavage factor Im (CFIm) complex associates with the CPSF and CSTF complexes to promote the assembly of the core mRNA 3'-processing machinery. Associates with the exon junction complex (EJC). Associates with the 80S ribosome particle. Interacts (via the RRM domain) with NUDT21/CPSF5; this interaction is direct and enhances binding to RNA. Interacts (via Arg/Ser-rich domain) with FIP1L1 (preferentially via unphosphorylated form and Arg/Glu/Asp-rich domain); this interaction mediates, at least in part, the interaction between the CFIm and CPSF complexes and may be inhibited by CPSF6 hyper-phosphorylation. Interacts (via N-terminus) with NXF1; this interaction is direct. Interacts with SRSF3. Interacts with SRSF7. Interacts with SNRNP70. Interacts with TRA2B/SFRS10. Interacts with UPF1. Interacts with UPF3B. Interacts with VIRMA. Interacts (via Arg/Ser-rich domain) with TNPO3; promoting nuclear import of CPSF6 independently of its phosphorylation status. Interacts with YTHDC1. (Microbial infection) Interacts (via C-terminus) with HIV-1 capsid protein p24 (CA). In terms of processing, phosphorylated. Phosphorylated in the Arg/Ser-rich domain by SRPK1, in vitro. Symmetrically dimethylated on arginine residues in the GAR motif by PRMT5 in a WDR77- and CLNS1A-dependent manner. Asymmetrically dimethylated on arginine residues in the GAR motif by PRMT1.

Its subcellular location is the nucleus. The protein resides in the nucleoplasm. It is found in the nucleus speckle. The protein localises to the cytoplasm. Its function is as follows. Component of the cleavage factor Im (CFIm) complex that functions as an activator of the pre-mRNA 3'-end cleavage and polyadenylation processing required for the maturation of pre-mRNA into functional mRNAs. CFIm contributes to the recruitment of multiprotein complexes on specific sequences on the pre-mRNA 3'-end, so called cleavage and polyadenylation signals (pA signals). Most pre-mRNAs contain multiple pA signals, resulting in alternative cleavage and polyadenylation (APA) producing mRNAs with variable 3'-end formation. The CFIm complex acts as a key regulator of cleavage and polyadenylation site choice during APA through its binding to 5'-UGUA-3' elements localized in the 3'-untranslated region (UTR) for a huge number of pre-mRNAs. CPSF6 enhances NUDT21/CPSF5 binding to 5'-UGUA-3' elements localized upstream of pA signals and promotes RNA looping, and hence activates directly the mRNA 3'-processing machinery. Plays a role in mRNA export. In terms of biological role, (Microbial infection) Binds HIV-1 capsid-nucleocapsid (HIV-1 CA-NC) complexes and might thereby promote the integration of the virus in the nucleus of dividing cells (in vitro). This chain is Cleavage and polyadenylation specificity factor subunit 6, found in Homo sapiens (Human).